The primary structure comprises 885 residues: Protein kintoun (885 aa).

Disordered regions lie at residues 208 to 235 (LSKN…ADAG), 371 to 390 (LSRE…PVED), 607 to 636 (ELQQ…ESAC), 644 to 663 (EHHE…QRSY), 781 to 806 (RRLS…QPAH), and 819 to 871 (NNNH…MMFE). The segment covering 213 to 232 (TAEEKEPHPLEHMYPKKPEA) has biased composition (basic and acidic residues). S376 is modified (phosphoserine). Over residues 612–629 (HHQKKLNKKQRKRNKKQR) the composition is skewed to basic residues. S784 bears the Phosphoserine mark. Basic and acidic residues predominate over residues 824 to 837 (HVKDNKKQSLHDSG). Residues 842-855 (NGSINNKNNHSNEN) show a composition bias toward low complexity.

Belongs to the PIH1 family. Kintoun subfamily. Interacts with Pp1alpha-96A, Pp1-87B, Pp1-13C and flw.

The protein localises to the cytoplasm. Its function is as follows. Required for cytoplasmic pre-assembly of axonemal dyneins, thereby playing a central role in motility in cilia and flagella. Involved in pre-assembly of dynein arm complexes in the cytoplasm before intraflagellar transport loads them for the ciliary compartment. The chain is Protein kintoun from Drosophila mojavensis (Fruit fly).